We begin with the raw amino-acid sequence, 1013 residues long: Chitin synthase A (1013 aa).

Asn-10 carries N-linked (GlcNAc...) asparagine glycosylation. Disordered stretches follow at residues 26 to 83 (RYSY…AADW) and 95 to 218 (ERAD…RRGV). The span at 64 to 81 (TASRPASPARPWSPTRAA) shows a compositional bias: low complexity. Positions 154-173 (TISSRHGPQGSVQSFTSEST) are enriched in polar residues. N-linked (GlcNAc...) asparagine glycosylation is found at Asn-194 and Asn-316. The next 5 membrane-spanning stretches (helical) occupy residues 646 to 666 (LLQL…FFFI), 686 to 706 (IFIV…IFSM), 721 to 741 (MIVY…LIVL), 759 to 779 (LFVN…FTSF), and 792 to 811 (AQYF…YAFC). An N-linked (GlcNAc...) asparagine glycan is attached at Asn-837. The next 2 helical transmembrane spans lie at 892–912 (VSVW…VYGV) and 919–939 (VYLA…AIGS). Asn-967, Asn-980, Asn-989, and Asn-995 each carry an N-linked (GlcNAc...) asparagine glycan.

The protein belongs to the chitin synthase family. Class II subfamily. As to expression, mainly expressed in the metulae, phialides, and conidia.

Its subcellular location is the cell membrane. The protein localises to the cell septum. It carries out the reaction [(1-&gt;4)-N-acetyl-beta-D-glucosaminyl](n) + UDP-N-acetyl-alpha-D-glucosamine = [(1-&gt;4)-N-acetyl-beta-D-glucosaminyl](n+1) + UDP + H(+). Functionally, polymerizes chitin, a structural polymer of the cell wall and septum, by transferring the sugar moiety of UDP-GlcNAc to the non-reducing end of the growing chitin polymer. Seems not to be involved in hyphal growth, but, with chsC, chsA shares critical functions in hyphal wall integrity and differentiation. ChsA and chsC share also overlapping roles in septum formation. Invoved in the production of the asexual spores (conidia) that are formed by differentiated aerial hyphae called conidiophores. In Emericella nidulans (strain FGSC A4 / ATCC 38163 / CBS 112.46 / NRRL 194 / M139) (Aspergillus nidulans), this protein is Chitin synthase A.